A 136-amino-acid chain; its full sequence is Large ribosomal subunit protein uL16 (136 aa).

This sequence belongs to the universal ribosomal protein uL16 family. As to quaternary structure, part of the 50S ribosomal subunit.

In terms of biological role, binds 23S rRNA and is also seen to make contacts with the A and possibly P site tRNAs. The sequence is that of Large ribosomal subunit protein uL16 from Vibrio campbellii (strain ATCC BAA-1116).